The sequence spans 113 residues: UPF0212 protein AF_0282 (113 aa).

Belongs to the UPF0212 family.

The sequence is that of UPF0212 protein AF_0282 from Archaeoglobus fulgidus (strain ATCC 49558 / DSM 4304 / JCM 9628 / NBRC 100126 / VC-16).